Here is a 317-residue protein sequence, read N- to C-terminus: Porphobilinogen deaminase (317 aa).

Residue Cys-245 is modified to S-(dipyrrolylmethanemethyl)cysteine.

It belongs to the HMBS family. In terms of assembly, monomer. The cofactor is dipyrromethane.

The catalysed reaction is 4 porphobilinogen + H2O = hydroxymethylbilane + 4 NH4(+). The protein operates within porphyrin-containing compound metabolism; protoporphyrin-IX biosynthesis; coproporphyrinogen-III from 5-aminolevulinate: step 2/4. It functions in the pathway porphyrin-containing compound metabolism; chlorophyll biosynthesis. Its function is as follows. Tetrapolymerization of the monopyrrole PBG into the hydroxymethylbilane pre-uroporphyrinogen in several discrete steps. This chain is Porphobilinogen deaminase, found in Prochlorococcus marinus (strain MIT 9303).